Consider the following 603-residue polypeptide: MLRPVETPTREIKKLDGLWAFSLDRENCGIDQRWWESALQESRAIAVPGSFNDQFADADIRNYAGNVWYQREVFIPKGWAGQRIVLRFDAVTHYGKVWVNNQEVMEHQGGYTPFEADVTPYVIAGKSVRITVCVNNELNWQTIPPGMVITDENGKKKQSYFHDFFNYAGIHRSVMLYTTPNTWVDDITVVTHVAQDCNHASVDWQVVANGDVSVELRDADQQVVATGQGTSGTLQVVNPHLWQPGEGYLYELCVTAKSQTECDIYPLRVGIRSVAVKGEQFLINHKPFYFTGFGRHEDADLRGKGFDNVLMVHDHALMDWIGANSYRTSHYPYAEEMLDWADEHGIVVIDETAAVGFNLSLGIGFEAGNKPKELYSEEAVNGETQQAHLQAIKELIARDKNHPSVVMWSIANEPDTRPQGAREYFAPLAEATRKLDPTRPITCVNVMFCDAHTDTISDLFDVLCLNRYYGWYVQSGDLETAEKVLEKELLAWQEKLHQPIIITEYGVDTLAGLHSMYTDMWSEEYQCAWLDMYHRVFDRVSAVVGEQVWNFADFATSQGILRVGGNKKGIFTRDRKPKSAAFLLQKRWTGMNFGEKPQQGGKQ.

Positions 163 and 412 each coordinate D-glucuronate. The active-site Proton donor is Glu-413. The D-glucuronate site is built by Asn-466, Tyr-472, Glu-504, Trp-549, and Lys-568. Glu-504 serves as the catalytic Nucleophile. The N-K motif signature appears at 566 to 568 (NKK).

It belongs to the glycosyl hydrolase 2 family. In terms of assembly, homotetramer.

The catalysed reaction is a beta-D-glucuronoside + H2O = D-glucuronate + an alcohol. It carries out the reaction 4-methylumbelliferone beta-D-glucuronate + H2O = 4-methylumbelliferone + D-glucuronate. Its activity is regulated as follows. Potently inhibited by a set of synthetic compounds like thio-urea derivatives and analogs, and uronic isofagomine (UIFG) derivatives. Inhibitors of gut microbial beta-glucuronidases block the reactivation of glucuronidated cancer drugs, and thereby alleviate drug-induced GI toxicity. Functionally, displays beta-glucuronidase activity with the artificial substrate p-nitrophenyl-beta-D-glucuronide (PNPG) and with 4-methylumbelliferyl-glucuronide. Is likely capable of scavenging glucuronate from a range of chemically distinct xenobiotic and endobiotic glucuronides present in the gastrointestinal (GI) tract, to be able to utilize these diverse sources of carbon. As part of the GI microbiome, this enzyme is able to reactivate glucuronide drug conjugates, such reactivated compounds can significantly damage the GI tract. In Escherichia coli (strain K12), this protein is Beta-glucuronidase (uidA).